A 280-amino-acid chain; its full sequence is Tryptophan synthase alpha chain (280 aa).

Catalysis depends on proton acceptor residues Glu49 and Asp60.

It belongs to the TrpA family. In terms of assembly, tetramer of two alpha and two beta chains.

It carries out the reaction (1S,2R)-1-C-(indol-3-yl)glycerol 3-phosphate + L-serine = D-glyceraldehyde 3-phosphate + L-tryptophan + H2O. It functions in the pathway amino-acid biosynthesis; L-tryptophan biosynthesis; L-tryptophan from chorismate: step 5/5. Functionally, the alpha subunit is responsible for the aldol cleavage of indoleglycerol phosphate to indole and glyceraldehyde 3-phosphate. The polypeptide is Tryptophan synthase alpha chain (Corynebacterium glutamicum (strain ATCC 13032 / DSM 20300 / JCM 1318 / BCRC 11384 / CCUG 27702 / LMG 3730 / NBRC 12168 / NCIMB 10025 / NRRL B-2784 / 534)).